The chain runs to 1071 residues: ATP-dependent helicase/deoxyribonuclease subunit B (1071 aa).

It belongs to the helicase family. AddB/RexB type 2 subfamily. As to quaternary structure, heterodimer of AddA and RexB. Mg(2+) is required as a cofactor.

Its function is as follows. The heterodimer acts as both an ATP-dependent DNA helicase and an ATP-dependent, dual-direction single-stranded exonuclease. Recognizes the chi site generating a DNA molecule suitable for the initiation of homologous recombination. This subunit has 5' -&gt; 3' nuclease activity but not helicase activity. The polypeptide is ATP-dependent helicase/deoxyribonuclease subunit B (Streptococcus pyogenes serotype M12 (strain MGAS2096)).